The following is a 196-amino-acid chain: Large ribosomal subunit protein uL5 (196 aa).

Belongs to the universal ribosomal protein uL5 family. In terms of assembly, part of the 50S ribosomal subunit; part of the 5S rRNA/L5/L18/L25 subcomplex. Contacts the 5S rRNA and the P site tRNA. Forms a bridge to the 30S subunit in the 70S ribosome.

Functionally, this is one of the proteins that bind and probably mediate the attachment of the 5S RNA into the large ribosomal subunit, where it forms part of the central protuberance. In the 70S ribosome it contacts protein S13 of the 30S subunit (bridge B1b), connecting the 2 subunits; this bridge is implicated in subunit movement. Contacts the P site tRNA; the 5S rRNA and some of its associated proteins might help stabilize positioning of ribosome-bound tRNAs. The sequence is that of Large ribosomal subunit protein uL5 from Prosthecochloris aestuarii (strain DSM 271 / SK 413).